Here is a 172-residue protein sequence, read N- to C-terminus: Large ribosomal subunit protein bL17 (172 aa).

The segment covering 140–160 (LKAEAKAKREEKKPAKKEEKP) has biased composition (basic and acidic residues). Residues 140–172 (LKAEAKAKREEKKPAKKEEKPKKAKKEKAAASN) form a disordered region.

This sequence belongs to the bacterial ribosomal protein bL17 family. Part of the 50S ribosomal subunit. Contacts protein L32.

This is Large ribosomal subunit protein bL17 from Leptospira biflexa serovar Patoc (strain Patoc 1 / Ames).